The primary structure comprises 688 residues: MELQTLQEALKVEIQVHQKLVAQMKQDPQNADLKKQLHELQAKITALSEKQKRVVEQLRKNLIVKQEQPDKFQIQPLSQSENKLQTAQQQPLQPLQQQQPQQPQQQQQQQQQHAQQSAAAPPSLTASQKTVTTASMITTKTLPLVLKAATATMPASVVGQRPTIAMVTAINSQKAVLSTDVQNTPVNLQTSSKVTGPGAEAVQIVAKNTVTLQVQATPPQPIKVPQFIPPPRLTPRPNFLPQVRPKPVAQNNIPIAPAPPPMLAAPQLIQRPVMLTKFTPTTLPTSQNSIHPVRVVNGQTATIAKTFPMAQLTSIVIATPGTRLAGPQTVQLSKPSLEKQTVKSHPEAEEKQAESRTVTPPAAPKPKREENPQKLAFMVSLGLVTHDHLEEIQSKRQERKRRTTANPVYSGAVFEPERKKSAVTYLNSTMHPGTRKRGRPPKYNAVLGFGALTPTSPPSSHPDSPENEKTETTFTFPAPVQPVSLPSPTSTDGDIHEDFCSVCRKSGQLLMCDTCSRVYHLDCLEPPLKTIPKGMWICPRCQDQMLKKEEAIPWPGTLAIVHSYIAYKAAKEEEKQKLLKWSSDLKQEREQLEQKVKELSSSISKCMEMKSSILARQKEMRSSLDKVKRLIRLVHGVDLCRPVDSEATAGALSNGPDCTPPANAASTPAPSPSSQSCTANCNQGEETK.

Residue Lys-65 forms a Glycyl lysine isopeptide (Lys-Gly) (interchain with G-Cter in SUMO2) linkage. Disordered regions lie at residues 78–127 and 327–373; these read SQSE…LTAS and PQTV…ENPQ. Residues 85-127 are compositionally biased toward low complexity; sequence QTAQQQPLQPLQQQQPQQPQQQQQQQQQHAQQSAAAPPSLTAS. Residues 336-354 show a composition bias toward basic and acidic residues; the sequence is SLEKQTVKSHPEAEEKQAE. The a.T hook DNA-binding region spans 434 to 446; sequence TRKRGRPPKYNAV. Residues 449 to 471 form a disordered region; sequence FGALTPTSPPSSHPDSPENEKTE. Thr-453 bears the Phosphothreonine mark. Ser-456 bears the Phosphoserine mark. The PHD-type zinc-finger motif lies at 497-544; the sequence is EDFCSVCRKSGQLLMCDTCSRVYHLDCLEPPLKTIPKGMWICPRCQDQ. The stretch at 571 to 609 forms a coiled coil; sequence KEEEKQKLLKWSSDLKQEREQLEQKVKELSSSISKCMEM. A disordered region spans residues 650–688; the sequence is GALSNGPDCTPPANAASTPAPSPSSQSCTANCNQGEETK. Residues 660 to 679 are compositionally biased toward low complexity; sequence PPANAASTPAPSPSSQSCTA.

As to quaternary structure, component of a BHC histone deacetylase complex that contains HDAC1, HDAC2, HMG20B/BRAF35, KDM1A, RCOR1/CoREST and PHF21A/BHC80. The BHC complex may also contain ZMYM2, ZNF217, ZMYM3, GSE1 and GTF2I. In the complex, it interacts directly with HDAC1, HDAC2, HMG20B/BRAF35, KDM1A and RCOR1/CoREST. In terms of tissue distribution, expressed in the brain and testis. Weakly or not expressed in other tissues tested. Localized throughout the central nervous system (CNS) in brain, including the cerebellum, hippocampus, and cortex. Notably present in neuronal cells of granular cell layer and dentate gyrus in cerebellum and hippocampus, respectively. In the seminiferous tubules, the signals it is present strongly in spermatocytes, and weakly in spermatogonia and round spermatids. In some cases, it is also observed solely in spermatocytes (at protein level).

It is found in the nucleus. Component of the BHC complex, a corepressor complex that represses transcription of neuron-specific genes in non-neuronal cells. The BHC complex is recruited at RE1/NRSE sites by REST and acts by deacetylating and demethylating specific sites on histones, thereby acting as a chromatin modifier. In the BHC complex, it may act as a scaffold. Inhibits KDM1A-mediated demethylation of 'Lys-4' of histone H3 in vitro, suggesting a role in demethylation regulation. This chain is PHD finger protein 21A, found in Mus musculus (Mouse).